A 711-amino-acid polypeptide reads, in one-letter code: MNKGWLELESDPGLFTLLVEDFGVKGVQVEEIYDLQSKCQGPVYGFIFLFKWIEERRSRRKVSTLVDDTSVIDDDIVNNMFFAHQLIPNSCATHALLSVLLNCSNVDLGPTLSRMKDFTKGFSPESKGYAIGNAPELAKAHNSHARPEPRHLPEKQNGLSAVRTMEAFHFVSYVPITGRLFELDGLKVYPIDHGPWGEDEEWTDKARRVIMERIGLATAGIKYEARLHVLKVNRQTVLEALQQLIRVTQPELIQTHKSQESQLPEESKPASSKSPLALETSRAPVASESTHTDGVEEVAGSCPQAPTHSPPSKPKLVVKPPGSNINGVPPNPTPIVQRLPAFLDNHNYAKSPMQEEEDLAAGVGRSRVPVRPPQQYSDDEDDYEDEEEDDAQSTSSAIRYKRKGPGKPGPLSSSGDGQLSVLQPNTINVLAEKLKESQKDLSIPLSIKTSSGAGSPAVAVPTHSQPSPTPSNESTDTASEIGSAFNSPLRSPIRSANPTRPSSPVTSHISKVLFGEDDSLLRVDCIRYNRAVRDLGPVISTGLLHLAEDGVLSPLALTESGKGSSPSIRPSQGSQGSGSPEEKEVVEAVDSREKPGLVRPSESLNGEKYSPKELLALLKCVEAEIANYEACLKEEVEKRKKFKIDDQRRTHNYDEFICTFISMLAQEGMLANLVEQNISVRRRQGVSIGRLHKQRKPDRRKRSRPYKAKRQ.

Residues 4–234 (GWLELESDPG…ARLHVLKVNR (231 aa)) form the UCH catalytic domain. The Arg-finger motif signature appears at 56–60 (RRSRR). Catalysis depends on Cys91, which acts as the Nucleophile. The Proton donor role is filled by His169. A disordered region spans residues 255–337 (THKSQESQLP…VPPNPTPIVQ (83 aa)). A compositionally biased stretch (low complexity) spans 269–278 (PASSKSPLAL). Ser274 bears the Phosphoserine mark. The HBM-like motif motif lies at 345-348 (NHNY). 2 positions are modified to phosphoserine: Ser351 and Ser377. Disordered stretches follow at residues 354 to 420 (QEEE…GQLS) and 446 to 506 (SIKT…SPVT). Residues 377–391 (SDDEDDYEDEEEDDA) are compositionally biased toward acidic residues. The segment covering 462–506 (THSQPSPTPSNESTDTASEIGSAFNSPLRSPIRSANPTRPSSPVT) has biased composition (polar residues). At Thr475 the chain carries Phosphothreonine. Phosphoserine occurs at positions 503, 519, 567, and 579. The segment at 557–605 (LTESGKGSSPSIRPSQGSQGSGSPEEKEVVEAVDSREKPGLVRPSESLN) is disordered. A compositionally biased stretch (low complexity) spans 563-579 (GSSPSIRPSQGSQGSGS). The tract at residues 578 to 703 (GSPEEKEVVE…QRKPDRRKRS (126 aa)) is interaction with BRCA1. Positions 580 to 596 (PEEKEVVEAVDSREKPG) are enriched in basic and acidic residues. Residues 612-643 (KELLALLKCVEAEIANYEACLKEEVEKRKKFK) are a coiled coil. The tract at residues 624-668 (EIANYEACLKEEVEKRKKFKIDDQRRTHNYDEFICTFISMLAQEG) is interaction with YY1. Residues 652–680 (NYDEFICTFISMLAQEGMLANLVEQNISV) form the ULD domain. Positions 681 to 683 (RRR) are interaction with nucleosomal DNA forming a DNA clamp with ASXL1. The Classical bipartite Nuclear localization signal (NLS) signature appears at 681–704 (RRRQGVSIGRLHKQRKPDRRKRSR). A disordered region spans residues 685-711 (GVSIGRLHKQRKPDRRKRSRPYKAKRQ). Residues 695–711 (RKPDRRKRSRPYKAKRQ) form a positively charged C-terminal extension (CTE) region. Positions 699–704 (RRKRSR) match the Nuclear localization signal motif. The short motif at 699 to 706 (RRKRSRPY) is the Non-classical PY-nuclear localization signal (PY-NLS) element.

The protein belongs to the peptidase C12 family. BAP1 subfamily. Core component of the polycomb repressive deubiquitinase (PR-DUB) complex, at least composed of BAP1, one of ASXL1, ASXL2 or (probably) ASXL3, and one of MBD5 or MBD6. The PR-DUB core associates with a number of accessory proteins, including FOXK1, FOXK2, KDM1B, HCFC1, YY1 and OGT; KDM1B specifically associates with ASXL2 PR-DUB complexes. The BAP1 deubiquitinase activity is not required for PR-DUB assembly. Homodimerizes (via coiled-coil hinge-region between the UCH and ULD domains) to mediate assembly of 2 copies of the BAP1-ASXL heterodimer into a bisymmetric tetramer; dimerization enhances association with nucleosomes. The PR-DUB complex associates with nucleosomes to mediate deubiquitination of 'lys-120' of histone H2AK118ub1 substrates; the association requires the positively charged C-terminal tail of BAP1. Interacts (via ULD domain) with ASXL1 (via DEUBAD domain); the interaction is direct and forms a ubiquitin binding cleft. The interaction with ASXL1 stabilizes BAP1 but is not required for nucleosome binding. Associates (via C-terminus) with nucleosome and chromatosome complexes through direct interaction with DNA and the histone3/4 dimer; this association displaces the histone-2A C-terminal tail, extending and orienting the H2AK118ub1 substrate towards the BAP1 deubiquitinase active site. Also interacts (via arginine finger) directly with the histone H2A-H2B acidic patch; this interaction is not critical for nucleosome-chromatosome association but may play a role in orienting the H2AK118ub1 substrate towards the PR-DUB complex active site. Interacts with BRCA1 (via the RING finger). Interacts (via HBM-like motif) with HCFC1. Interacts (via a C-terminal region overlapping the ULD domain) with YY1; the interaction is direct and requires the interaction with HCFC1. Interacts (when phosphorylated at Thr-475) with FOXK1. Interacts (when phosphorylated at Thr-475) with FOXK2; leading to recruitment of the PR-DUB complex and repression of FOXK2 target genes. Interacts (via non-classical PY-NLS) with TNPO1/transportin-1 (via HEAT repeats 8-12); the interaction is direct, mediates BAP1 nuclear localization and disrupts BAP1 homodimerization. Interacts (via C-terminus) with KPNA1/importin alpha5 and KPNA2/importin alpha1; these interactions can contribute to BAP1 nuclear localization but are less important than the interaction with TNPO1/transportin-1. The interaction with TNPO1/transportin-1 disrupts homodimerization and blocks ubiquitination by UBE2O. In terms of processing, ubiquitinated: monoubiquitinated at multiple sites within its nuclear localization signal (NLS) BY UBE2O, leading to cytoplasmic retention. Able to mediate autodeubiquitination via intramolecular interactions to counteract cytoplasmic retention. Monoubiquitinated on at least 4 sites near or within its PY-NLS.

The protein localises to the cytoplasm. The protein resides in the nucleus. It localises to the chromosome. The catalysed reaction is Thiol-dependent hydrolysis of ester, thioester, amide, peptide and isopeptide bonds formed by the C-terminal Gly of ubiquitin (a 76-residue protein attached to proteins as an intracellular targeting signal).. In terms of biological role, deubiquitinating enzyme that plays a key role in chromatin by mediating deubiquitination of histone H2A and HCFC1. Catalytic component of the polycomb repressive deubiquitinase (PR-DUB) complex, a complex that specifically mediates deubiquitination of histone H2A monoubiquitinated at 'Lys-120' (H2AK119ub1). Does not deubiquitinate monoubiquitinated histone H2B. The PR-DUB complex is an epigenetic regulator of gene expression and acts as a transcriptional coactivator, affecting genes involved in development, cell communication, signaling, cell proliferation and cell viability. Antagonizes PRC1 mediated H2AK119ub1 monoubiquitination. As part of the PR-DUB complex, associates with chromatin enriched in histone marks H3K4me1, H3K4me3, and H3K27Ac, but not in H3K27me3. Acts as a regulator of cell growth by mediating deubiquitination of HCFC1 N-terminal and C-terminal chains, with some specificity toward 'Lys-48'-linked polyubiquitin chains compared to 'Lys-63'-linked polyubiquitin chains. Deubiquitination of HCFC1 does not lead to increase stability of HCFC1. Interferes with the BRCA1 and BARD1 heterodimer activity by inhibiting their ability to mediate ubiquitination and autoubiquitination. It however does not mediate deubiquitination of BRCA1 and BARD1. Able to mediate autodeubiquitination via intramolecular interactions to counteract monoubiquitination at the nuclear localization signal (NLS), thereby protecting it from cytoplasmic sequestration. Negatively regulates epithelial-mesenchymal transition (EMT) of trophoblast stem cells during placental development by regulating genes involved in epithelial cell integrity, cell adhesion and cytoskeletal organization. The sequence is that of Ubiquitin carboxyl-terminal hydrolase BAP1 (BAP1) from Bos taurus (Bovine).